A 418-amino-acid polypeptide reads, in one-letter code: Tyrosine--tRNA ligase (418 aa).

An L-tyrosine-binding site is contributed by Tyr-38. Positions 43 to 52 match the 'HIGH' region motif; that stretch reads CTAKSLHVGS. L-tyrosine-binding residues include Tyr-175 and Gln-179. Residues 235-239 carry the 'KMSKS' region motif; the sequence is KMGKT. Lys-238 contacts ATP. One can recognise an S4 RNA-binding domain in the interval 348–413; the sequence is LPIIKLLQMC…CGKKRHLKVM (66 aa).

This sequence belongs to the class-I aminoacyl-tRNA synthetase family. TyrS type 1 subfamily. As to quaternary structure, homodimer.

It is found in the cytoplasm. It carries out the reaction tRNA(Tyr) + L-tyrosine + ATP = L-tyrosyl-tRNA(Tyr) + AMP + diphosphate + H(+). Its function is as follows. Catalyzes the attachment of tyrosine to tRNA(Tyr) in a two-step reaction: tyrosine is first activated by ATP to form Tyr-AMP and then transferred to the acceptor end of tRNA(Tyr). This Ehrlichia chaffeensis (strain ATCC CRL-10679 / Arkansas) protein is Tyrosine--tRNA ligase.